The following is a 1501-amino-acid chain: Inactive protein tyrosine kinase pTKL (1501 aa).

3 N-linked (GlcNAc...) asparagine glycosylation sites follow: Asn64, Asn128, and Asn133. Residues 204–221 show a composition bias toward basic residues; the sequence is KKNKKNKKNKKKKNKKTK. The tract at residues 204-223 is disordered; it reads KKNKKNKKNKKKKNKKTKNT. Residues Asn239, Asn242, Asn258, and Asn327 are each glycosylated (N-linked (GlcNAc...) asparagine). The segment covering 257–273 has biased composition (basic and acidic residues); that stretch reads MNISLHEKNDKKNEKKN. The interval 257–276 is disordered; sequence MNISLHEKNDKKNEKKNEKK. Residues 301–366 enclose the SAM domain; the sequence is WSLREVIQWL…LQLIKNLQVM (66 aa). The segment at 392-425 is disordered; it reads NKNIKKGKNIKKEKKKKKEKNIKKEKKKKKKETK. Residues 394 to 424 are compositionally biased toward basic residues; it reads NIKKGKNIKKEKKKKKEKNIKKEKKKKKKET. Residues 399 to 433 adopt a coiled-coil conformation; it reads KNIKKEKKKKKEKNIKKEKKKKKKETKKFNNMDKK. Residues Asn448, Asn463, and Asn471 are each glycosylated (N-linked (GlcNAc...) asparagine). The short motif at 483-486 is the RVxF motif 1 element; it reads KVSF. Asn506 carries N-linked (GlcNAc...) asparagine glycosylation. Positions 543–597 are enriched in low complexity; that stretch reads QLSSPLSSPLSSPSPSSSPSSSPSSSPSSSPSSSPSPSSSPSPSSSPSSSPSSSP. Residues 543–607 form a disordered region; it reads QLSSPLSSPL…SSPPSPLSYK (65 aa). N-linked (GlcNAc...) asparagine glycosylation occurs at Asn652. Residues 659 to 678 form a disordered region; sequence IKKSKSKYNNDKKEQKKLPL. Positions 666–675 are enriched in basic and acidic residues; it reads YNNDKKEQKK. Residues Asn681, Asn712, Asn737, Asn811, and Asn819 are each glycosylated (N-linked (GlcNAc...) asparagine). Residues 836 to 844 and Lys864 each bind ATP; that span reads QNINNFGKY. Asn1024, Asn1031, Asn1074, and Asn1157 each carry an N-linked (GlcNAc...) asparagine glycan. The 396-residue stretch at 1088-1483 folds into the Protein kinase domain; that stretch reads FHYQHNVLCG…HILKTISTLY (396 aa). Positions 1238–1241 match the RVxF motif 2 motif; that stretch reads KVLF. Asn1382 is a glycosylation site (N-linked (GlcNAc...) asparagine).

This sequence belongs to the protein kinase superfamily. TKL Ser/Thr protein kinase family. Interacts (via RVxF motif 1 and/or 2) with phosphatase PP1C. May interact (via SAM domain) with SERA5 (via C-terminus).

It is found in the parasitophorous vacuole. The protein resides in the host cell membrane. The protein localises to the host cytoplasm. Its subcellular location is the host cytoskeleton. In Plasmodium falciparum (isolate 3D7), this protein is Inactive protein tyrosine kinase pTKL.